We begin with the raw amino-acid sequence, 394 residues long: Elongation factor Tu (394 aa).

Residues 10 to 204 (KPHVNVGTIG…ALDNYIPEPE (195 aa)) form the tr-type G domain. The interval 19–26 (GHVDHGKT) is G1. 19–26 (GHVDHGKT) lines the GTP pocket. Residue Thr-26 participates in Mg(2+) binding. The G2 stretch occupies residues 60-64 (GITIS). Residues 81–84 (DCPG) form a G3 region. Residues 81–85 (DCPGH) and 136–139 (NKCD) contribute to the GTP site. The interval 136–139 (NKCD) is G4. The tract at residues 174 to 176 (SAL) is G5.

The protein belongs to the TRAFAC class translation factor GTPase superfamily. Classic translation factor GTPase family. EF-Tu/EF-1A subfamily. In terms of assembly, monomer.

The protein resides in the cytoplasm. It carries out the reaction GTP + H2O = GDP + phosphate + H(+). Functionally, GTP hydrolase that promotes the GTP-dependent binding of aminoacyl-tRNA to the A-site of ribosomes during protein biosynthesis. The protein is Elongation factor Tu of Idiomarina loihiensis (strain ATCC BAA-735 / DSM 15497 / L2-TR).